The primary structure comprises 377 residues: Nitric oxide reductase FlRd-NAD(+) reductase (377 aa).

The protein belongs to the FAD-dependent oxidoreductase family. FAD is required as a cofactor.

It is found in the cytoplasm. It catalyses the reaction 2 reduced [nitric oxide reductase rubredoxin domain] + NAD(+) + H(+) = 2 oxidized [nitric oxide reductase rubredoxin domain] + NADH. It participates in nitrogen metabolism; nitric oxide reduction. In terms of biological role, one of at least two accessory proteins for anaerobic nitric oxide (NO) reductase. Reduces the rubredoxin moiety of NO reductase. The protein is Nitric oxide reductase FlRd-NAD(+) reductase of Klebsiella pneumoniae subsp. pneumoniae (strain ATCC 700721 / MGH 78578).